A 179-amino-acid polypeptide reads, in one-letter code: Bifunctional protein PyrR (179 aa).

The PRPP-binding motif lies at 100-112 (VILIDDVLFTGRT).

This sequence belongs to the purine/pyrimidine phosphoribosyltransferase family. PyrR subfamily.

It carries out the reaction UMP + diphosphate = 5-phospho-alpha-D-ribose 1-diphosphate + uracil. In terms of biological role, regulates the transcription of the pyrimidine nucleotide (pyr) operon in response to exogenous pyrimidines. Also displays a weak uracil phosphoribosyltransferase activity which is not physiologically significant. The chain is Bifunctional protein PyrR from Mannheimia succiniciproducens (strain KCTC 0769BP / MBEL55E).